A 526-amino-acid chain; its full sequence is Peptide chain release factor 3 (526 aa).

Residues 9–277 (DKRRTFAIIS…GIVEWAPKPQ (269 aa)) enclose the tr-type G domain. GTP-binding positions include 18 to 25 (SHPDAGKT), 86 to 90 (DTPGH), and 140 to 143 (NKLD).

The protein belongs to the TRAFAC class translation factor GTPase superfamily. Classic translation factor GTPase family. PrfC subfamily.

It localises to the cytoplasm. Functionally, increases the formation of ribosomal termination complexes and stimulates activities of RF-1 and RF-2. It binds guanine nucleotides and has strong preference for UGA stop codons. It may interact directly with the ribosome. The stimulation of RF-1 and RF-2 is significantly reduced by GTP and GDP, but not by GMP. This chain is Peptide chain release factor 3, found in Shewanella sediminis (strain HAW-EB3).